The following is a 776-amino-acid chain: Reticulon-1 (776 aa).

Disordered regions lie at residues Met1–Ser103, Ile136–Ile168, Glu204–Pro244, and Leu285–Pro580. A compositionally biased stretch (basic and acidic residues) spans Glu204–Asp240. Ser327 is modified (phosphoserine). Residues Pro328–Ser341 are compositionally biased toward low complexity. Residues Ser350, Ser352, and Ser487 each carry the phosphoserine modification. Residues Ala497–Pro511 show a composition bias toward basic and acidic residues. The region spanning Ala589–Glu776 is the Reticulon domain. Helical transmembrane passes span Ile603–Val623 and Phe705–Leu725.

As to quaternary structure, interacts with NDRG1. Interacts with BACE1. Interacts with TMEM33. In terms of processing, phosphorylated.

Its subcellular location is the endoplasmic reticulum membrane. The protein resides in the golgi apparatus membrane. Functionally, inhibits amyloid precursor protein processing, probably by blocking BACE1 activity. This Pan troglodytes (Chimpanzee) protein is Reticulon-1 (RTN1).